Consider the following 416-residue polypeptide: Peptide chain release factor subunit 1 (416 aa).

The protein belongs to the eukaryotic release factor 1 family. As to quaternary structure, heterodimer of two subunits, one of which binds GTP.

The protein localises to the cytoplasm. Its function is as follows. Directs the termination of nascent peptide synthesis (translation) in response to the termination codons UAA, UAG and UGA. This Halorubrum lacusprofundi (strain ATCC 49239 / DSM 5036 / JCM 8891 / ACAM 34) protein is Peptide chain release factor subunit 1.